A 518-amino-acid polypeptide reads, in one-letter code: ESX-3 secretion system ATPase EccB3 (518 aa).

Residues 1–26 (MTGPVNPDDRRSFSSRTPVNENPDGV) are disordered. Residues 71 to 91 (VLTGALILVTGLVGCFIFSLF) traverse the membrane as a helical segment.

The protein belongs to the EccB family. In terms of assembly, part of the ESX-3 / type VII secretion system (T7SS), which is composed of cytosolic and membrane components. The ESX-3 membrane complex is composed of EccB3, EccC3, EccD3 and EccE3.

It localises to the cell inner membrane. Functionally, an ATPase. Part of the ESX-3 specialized secretion system, which is required for siderophore-mediated iron acquisition and for the secretion of EsxH and EsxG. This is ESX-3 secretion system ATPase EccB3 from Mycolicibacterium smegmatis (strain ATCC 700084 / mc(2)155) (Mycobacterium smegmatis).